Here is a 443-residue protein sequence, read N- to C-terminus: MQRRDDPASRLTRSSGRSCSKDPSGAHPSVRLTPSRPSPLPHRPRGGGGGPRGGARASPATQPPPLLPPSTPGPDATVVGSAPTPLLPPSATAAVKMEPENKYLPELMAEKDSLDPSFTHAMQLLSVEIEKIQKGESKKDDEENYLDLFSHKNMKLKERVLIPVKQYPKFNFVGKILGPQGNTIKRLQEETGAKISVLGKGSMRDKAKEEELRKGGDPKYAHLNMDLHVFIEVFGPPCEAYALMAHAMEEVKKFLVPDMMDDICQEQFLELSYLNGVPEPSRGRGVSVRGRGAAPPPPPVPRGRGVGPPRGALVRGTPVRGSITRGATVTRGVPPPPTVRGAPTPRARTAGIQRIPLPPTPAPETYEDYGYDDTYAEQSYEGYEGYYSQSQGESEYYDYGHGELQDSYEAYGQDDWNGTRPSLKAPPARPVKGAYREHPYGRY.

Residues 1–94 form a disordered region; sequence MQRRDDPASR…PLLPPSATAA (94 aa). Phosphoserine is present on residues S18 and S20. The residue at position 21 (K21) is an N6-acetyllysine. Residue S29 is modified to Phosphoserine. T33 is modified (phosphothreonine). An asymmetric dimethylarginine; by PRMT1 mark is found at R45 and R52. Phosphoserine; by MAPK1 is present on S58. Over residues 61 to 72 the composition is skewed to pro residues; the sequence is TQPPPLLPPSTP. 2 positions are modified to phosphothreonine; by MAPK1: T71 and T84. Over residues 81–94 the composition is skewed to low complexity; it reads SAPTPLLPPSATAA. Residues K96 and K102 each participate in a glycyl lysine isopeptide (Lys-Gly) (interchain with G-Cter in SUMO2) cross-link. An involved in homodimerization region spans residues 100 to 260; it reads ENKYLPELMA…VKKFLVPDMM (161 aa). Position 113 is a phosphoserine (S113). A Glycyl lysine isopeptide (Lys-Gly) (interchain with G-Cter in SUMO2) cross-link involves residue K139. S150 is subject to Phosphoserine. The KH domain maps to 171 to 197; it reads NFVGKILGPQGNTIKRLQEETGAKISV. K175 bears the N6-acetyllysine; alternate mark. A Glycyl lysine isopeptide (Lys-Gly) (interchain with G-Cter in SUMO2); alternate cross-link involves residue K175. A Phosphothreonine modification is found at T183. The interval 280–317 is disordered; sequence PSRGRGVSVRGRGAAPPPPPVPRGRGVGPPRGALVRGT. An omega-N-methylarginine mark is found at R282, R284, and R291. Residues 283–293 show a composition bias toward low complexity; sequence GRGVSVRGRGA. An Asymmetric dimethylarginine modification is found at R304. Low complexity predominate over residues 307-316; sequence GPPRGALVRG. Omega-N-methylarginine; by PRMT1 is present on residues R310 and R315. R320 is subject to Dimethylated arginine; alternate. Position 320 is an omega-N-methylarginine; by PRMT1; alternate (R320). An Omega-N-methylarginine; by PRMT1 modification is found at R325. Residues 326–345 are disordered; the sequence is GATVTRGVPPPPTVRGAPTP. Dimethylated arginine; alternate occurs at positions 331 and 340. 2 positions are modified to omega-N-methylarginine; by PRMT1; alternate: R331 and R340. R331 is modified (asymmetric dimethylarginine; alternate). An interaction with HNRNPA1 region spans residues 351–443; the sequence is GIQRIPLPPT…AYREHPYGRY (93 aa). At Y387 the chain carries Phosphotyrosine. Position 390 is a phosphoserine (S390). Positions 400-420 are interaction with ZBTB7A; it reads GHGELQDSYEAYGQDDWNGTR. The interval 411 to 443 is disordered; the sequence is YGQDDWNGTRPSLKAPPARPVKGAYREHPYGRY. K432 is covalently cross-linked (Glycyl lysine isopeptide (Lys-Gly) (interchain with G-Cter in SUMO2)). Positions 434–443 are enriched in basic and acidic residues; sequence AYREHPYGRY. 3 positions are modified to phosphotyrosine; by PTK6: Y435, Y440, and Y443.

It belongs to the KHDRBS family. Self-associates to form homooligomers when bound to RNA, oligomerization appears to be limited when binding to proteins. Forms a trimeric complex in the nucleus consisting of BANP, HDAC6 and KHDRBS1/SAM68; HDAC6 keeps KHDRBS1 in a deacetylated state which inhibits the inclusion of CD44 alternate exons. The complex is disrupted by MAPK1/MAPK3-mediated phosphorylation of BANP which results in BANP export to the cytoplasm. This facilitates acetylation of KHDRBS1 and CD44 variant exon inclusion. Interacts with KHDRBS3/SLIM-2 and KHDRBS2/SLIM-1; heterooligomer formation of KHDRBS family proteins may modulate RNA substrate specificity. Interacts with RASA1, FYN, GRB2, PLCG1, SRC, CBP and PRMT1. Interacts with PTK6 (via SH3 and SH2 domains). Forms a complex with ILF2, ILF3, YLPM1, RBMX, NCOA5 and PPP1CA. Binds WBP4/FBP21 (via WW domains), FNBP4/FBP30 (via WW domains). Interacts (via Arg/Gly-rich-flanked Pro-rich regions) with FYN (via the SH3 domain). Interacts with APC, HNRNPA1. Interacts with the non-receptor tyrosine kinase SRMS; the interaction leads to phosphorylation of KHDRBS1. Interacts with ZBTB7A; negatively regulates KHDRBS1 splicing activity toward BCL2L1. Tyrosine phosphorylated by several non-receptor tyrosine kinases including LCK, FYN and JAK3. Also tyrosine phosphorylated by the non-receptor tyrosine kinase SRMS in an EGF-dependent manner. Phosphorylation by PTK6 negatively regulates its RNA binding ability. Phosphorylation by PTK6 at Tyr-440 dictates the nuclear localization of KHDRBS1. Phosphorylation by MAPK1 at Ser-58, Thr-71 and Thr-84 regulates CD44 alternative splicing by promoting CD44 exon v5 inclusion. Post-translationally, acetylated. Positively correlates with ability to bind RNA. Deacetylated by HDAC6; this regulates alternative splicing by inhibiting the inclusion of CD44 alternate exons. In terms of processing, arginine methylation is required for nuclear localization. Inhibits interaction with Src-like SH3 domains, but not interaction with WW domains of WBP4/FBP21 and FNBP4/FBP30. In adult cerebellum expressed in most neuronal cell populations, specifically in cerebellar granule cells of the internal granular layer, ROR(alpha)-positive Purkinje cells, internal granular layer and molecular layer interneurons (at protein level).

The protein localises to the nucleus. Its subcellular location is the cytoplasm. It is found in the membrane. Recruited and tyrosine phosphorylated by several receptor systems, for example the T-cell, leptin and insulin receptors. Once phosphorylated, functions as an adapter protein in signal transduction cascades by binding to SH2 and SH3 domain-containing proteins. Role in G2-M progression in the cell cycle. Represses CBP-dependent transcriptional activation apparently by competing with other nuclear factors for binding to CBP. Also acts as a putative regulator of mRNA stability and/or translation rates and mediates mRNA nuclear export. Positively regulates the association of constitutive transport element (CTE)-containing mRNA with large polyribosomes and translation initiation. May not be involved in the nucleocytoplasmic export of unspliced (CTE)-containing RNA species. RNA-binding protein that plays a role in the regulation of alternative splicing and influences mRNA splice site selection and exon inclusion. Binds to RNA containing 5'-[AU]UAA-3' as a bipartite motif spaced by more than 15 nucleotides. Binds poly(A). In cooperation with HNRNPA1 modulates alternative splicing of BCL2L1 by promoting splicing toward isoform Bcl-X(S), and of SMN1. Can regulate CD44 alternative splicing in a Ras pathway-dependent manner. Can regulate alternative splicing of NRXN1 and NRXN3 in the laminin G-like domain 6 containing the evolutionary conserved neurexin alternative spliced segment 4 (AS4) involved in neurexin selective targeting to postsynaptic partners. In a neuronal activity-dependent manner cooperates synergistically with KHDRBS2/SLIM-1 in regulation of NRXN1 exon skipping at AS4. The cooperation with KHDRBS2/SLIM-1 is antagonistic for regulation of NXRN3 alternative splicing at AS4. This is KH domain-containing, RNA-binding, signal transduction-associated protein 1 from Mus musculus (Mouse).